A 63-amino-acid polypeptide reads, in one-letter code: uncharacterized protein (63 aa).

This is an uncharacterized protein from Acidianus bottle-shaped virus (isolate Italy/Pozzuoli) (ABV).